A 92-amino-acid chain; its full sequence is QEQGTNPSQEQNVPLPRNYKQALETNTPTKTSWPELVGVTAEQAETKIKEEMVDVQIQVSPHDSFVTADYNPKRVRLYVDESNKVTRTPSIG.

Positions 1–12 (QEQGTNPSQEQN) are enriched in polar residues. The segment at 1 to 31 (QEQGTNPSQEQNVPLPRNYKQALETNTPTKT) is disordered.

The protein belongs to the protease inhibitor I13 (potato type I serine protease inhibitor) family.

In terms of biological role, inhibitor of subtilisin. The protein is Subtilisin inhibitor 1 of Phaseolus angularis (Azuki bean).